A 377-amino-acid polypeptide reads, in one-letter code: tRNA-specific 2-thiouridylase MnmA (377 aa).

ATP-binding positions include 18-25 (GMSGGVDS) and M44. Residues 104–106 (NPD) form an interaction with target base in tRNA region. Catalysis depends on C109, which acts as the Nucleophile. A disulfide bond links C109 and C209. Position 134 (G134) interacts with ATP. The interaction with tRNA stretch occupies residues 159–161 (KDQ). C209 (cysteine persulfide intermediate) is an active-site residue. Positions 324 to 325 (RY) are interaction with tRNA.

Belongs to the MnmA/TRMU family.

The protein localises to the cytoplasm. The enzyme catalyses S-sulfanyl-L-cysteinyl-[protein] + uridine(34) in tRNA + AH2 + ATP = 2-thiouridine(34) in tRNA + L-cysteinyl-[protein] + A + AMP + diphosphate + H(+). In terms of biological role, catalyzes the 2-thiolation of uridine at the wobble position (U34) of tRNA, leading to the formation of s(2)U34. This Photobacterium profundum (strain SS9) protein is tRNA-specific 2-thiouridylase MnmA.